We begin with the raw amino-acid sequence, 93 residues long: UPF0358 protein OB1428 (93 aa).

It belongs to the UPF0358 family.

The polypeptide is UPF0358 protein OB1428 (Oceanobacillus iheyensis (strain DSM 14371 / CIP 107618 / JCM 11309 / KCTC 3954 / HTE831)).